Consider the following 462-residue polypeptide: L-seryl-tRNA(Sec) selenium transferase (462 aa).

K294 carries the post-translational modification N6-(pyridoxal phosphate)lysine.

It belongs to the SelA family. In terms of assembly, homodecamer; pentamer of dimers. Binds only one seryl-tRNA(Sec) per dimer. Requires pyridoxal 5'-phosphate as cofactor.

It is found in the cytoplasm. The catalysed reaction is L-seryl-tRNA(Sec) + selenophosphate + H(+) = L-selenocysteinyl-tRNA(Sec) + phosphate. Its pathway is aminoacyl-tRNA biosynthesis; selenocysteinyl-tRNA(Sec) biosynthesis; selenocysteinyl-tRNA(Sec) from L-seryl-tRNA(Sec) (bacterial route): step 1/1. Functionally, converts seryl-tRNA(Sec) to selenocysteinyl-tRNA(Sec) required for selenoprotein biosynthesis. In Yersinia pestis bv. Antiqua (strain Antiqua), this protein is L-seryl-tRNA(Sec) selenium transferase.